The sequence spans 246 residues: Probable transcriptional regulatory protein RB5500 (246 aa).

This sequence belongs to the TACO1 family.

It localises to the cytoplasm. The chain is Probable transcriptional regulatory protein RB5500 from Rhodopirellula baltica (strain DSM 10527 / NCIMB 13988 / SH1).